The chain runs to 1495 residues: Nuclear pore complex protein NUP160 (1495 aa).

Part of the nuclear pore complex (NPC). The NPC has an eight-fold symmetrical structure comprising a central transport channel and two rings, the cytoplasmic and nuclear rings, to which eight filaments are attached. The cytoplasmic filaments have loose ends, while the nuclear filaments are joined in a distal ring, forming a nuclear basket. NPCs are highly dynamic in configuration and composition, and can be devided in 3 subcomplexes, the NUP62 subcomplex, the NUP107-160 subcomplex and the NUP93 subcomplex, containing approximately 30 different nucleoporin proteins. Expressed in roots, stems, anthers, siliques and vascular tissues of cotyledons, leaves and hypocotyls.

It is found in the nucleus membrane. Its subcellular location is the nucleus. The protein localises to the nuclear pore complex. Contributes to the transfer of mature mRNA from the nucleus to the cytosol. Required for both R gene-mediated and basal disease resistance. RNA export seems to play a critical role in stress responses and regulation of plant growth and development. Required for proper expression of factors associated with auxin signaling. This chain is Nuclear pore complex protein NUP160, found in Arabidopsis thaliana (Mouse-ear cress).